The sequence spans 108 residues: Parvalbumin beta 2 (108 aa).

Position 1 is an N-acetylalanine (alanine 1). EF-hand domains lie at 38–73 and 77–108; these read KSAADIKKVFGIIDQDKSDFVEEDELKLFLQNFSAG and LTDAETATFLKAGDSDGDGKIGVDEFAAMVKG. Residues aspartate 51, aspartate 53, serine 55, phenylalanine 57, glutamate 59, glutamate 62, aspartate 90, aspartate 92, aspartate 94, lysine 96, and glutamate 101 each contribute to the Ca(2+) site.

Belongs to the parvalbumin family.

In muscle, parvalbumin is thought to be involved in relaxation after contraction. It binds two calcium ions. This Merluccius bilinearis (Silver hake) protein is Parvalbumin beta 2.